The following is a 556-amino-acid chain: Peptidylarginine deiminase (556 aa).

Positions 1 to 23 (MKKLLQAKALILALGLFQLPAIA) are cleaved as a signal peptide. The propeptide occupies 24–43 (QTQMQADRTNGQFATEEMQR). Cys-351 (amidino-cysteine intermediate) is an active-site residue.

Belongs to the agmatine deiminase family. It depends on FAD as a cofactor. FMN is required as a cofactor.

It is found in the secreted. Inhibited by cysteine and TLCK. Inhibited by high concentration of thiourea and thio-L-citrulline. Deiminates the guanidino group of C-terminal arginine residues on a variety of peptides, including the vasoregulatory peptide-hormone bradykinin, to yield ammonia and a citrulline residue. May promote the growth of the pathogen in the periodontal pocket by producing ammonia, ammonia having a protective effect during acidic cleaning cycles in the mouth. The sequence is that of Peptidylarginine deiminase from Porphyromonas gingivalis (strain ATCC BAA-308 / W83).